The following is an 828-amino-acid chain: Zinc finger protein 438 (828 aa).

Disordered stretches follow at residues 1 to 29 (MQNS…KGLQ), 143 to 173 (KSGC…LYKP), and 193 to 231 (ALTN…PAKQ). Composition is skewed to polar residues over residues 16-29 (NIPS…KGLQ) and 150-159 (PAQTQMCPQM). 3 consecutive C2H2-type zinc fingers follow at residues 507–529 (HRCH…MNTH), 535–557 (YSCR…MKLH), and 567–590 (MCCE…KEVH). The disordered stretch occupies residues 680-721 (EGTFPGSKGTQEELVQHASPDWKRHPERGKPEKVHSSSEESH). Basic and acidic residues predominate over residues 689–721 (TQEELVQHASPDWKRHPERGKPEKVHSSSEESH). Residues 776–799 (FNCLLCAEMLGRKEDLLHHWKHQH) form a C2H2-type 4 zinc finger.

The protein belongs to the krueppel C2H2-type zinc-finger protein family. As to expression, ubiquitous.

The protein localises to the nucleus. Functionally, isoform 1 acts as a transcriptional repressor. In Homo sapiens (Human), this protein is Zinc finger protein 438 (ZNF438).